Here is a 216-residue protein sequence, read N- to C-terminus: Movement and silencing protein TGBp1 (216 aa).

One can recognise a (+)RNA virus helicase ATP-binding domain in the interval 1-110 (MEFCGGTLRT…GEVRPAHFTC (110 aa)). Residues 111-216 (SHTHRFGKST…RHTDSLLILN (106 aa)) enclose the (+)RNA virus helicase C-terminal domain.

This sequence belongs to the Tymovirales TGBp1 protein family. As to quaternary structure, homodimer and homooligomer. Interacts with capsid protein. Interacts with host AGO1; this interaction targets the host protein for degradation, thereby suppressing the antiviral RNA silencing.

It is found in the host cytoplasm. In terms of biological role, transports viral genome to neighboring plant cells directly through plasmosdesmata, without any budding. The movement protein allows efficient cell to cell propagation, by bypassing the host cell wall barrier. Increases plasmodesma size exclusion limit. Acts as a suppressor of RNA-mediated gene silencing, also known as post-transcriptional gene silencing (PTGS), a mechanism of plant viral defense that limits the accumulation of viral RNAs. The chain is Movement and silencing protein TGBp1 from Lilium formosanum.